The sequence spans 472 residues: ATP synthase subunit beta (472 aa).

160–167 (GGAGVGKT) is an ATP binding site.

Belongs to the ATPase alpha/beta chains family. In terms of assembly, F-type ATPases have 2 components, CF(1) - the catalytic core - and CF(0) - the membrane proton channel. CF(1) has five subunits: alpha(3), beta(3), gamma(1), delta(1), epsilon(1). CF(0) has three main subunits: a(1), b(2) and c(9-12). The alpha and beta chains form an alternating ring which encloses part of the gamma chain. CF(1) is attached to CF(0) by a central stalk formed by the gamma and epsilon chains, while a peripheral stalk is formed by the delta and b chains.

The protein resides in the cell membrane. It catalyses the reaction ATP + H2O + 4 H(+)(in) = ADP + phosphate + 5 H(+)(out). Its function is as follows. Produces ATP from ADP in the presence of a proton gradient across the membrane. The catalytic sites are hosted primarily by the beta subunits. The polypeptide is ATP synthase subunit beta (Lachnoclostridium phytofermentans (strain ATCC 700394 / DSM 18823 / ISDg) (Clostridium phytofermentans)).